The chain runs to 421 residues: Tyrosine--tRNA ligase (421 aa).

Tyr35 contacts L-tyrosine. A 'HIGH' region motif is present at residues 40–49 (PTGPSLHAGH). Residues Tyr169 and Gln173 each contribute to the L-tyrosine site. The short motif at 229–233 (KFGKS) is the 'KMSKS' region element. Lys232 is an ATP binding site. Positions 354 to 420 (RTIVDLLIAS…GKKNFAGVKI (67 aa)) constitute an S4 RNA-binding domain.

It belongs to the class-I aminoacyl-tRNA synthetase family. TyrS type 1 subfamily. Homodimer.

It localises to the cytoplasm. It carries out the reaction tRNA(Tyr) + L-tyrosine + ATP = L-tyrosyl-tRNA(Tyr) + AMP + diphosphate + H(+). Functionally, catalyzes the attachment of tyrosine to tRNA(Tyr) in a two-step reaction: tyrosine is first activated by ATP to form Tyr-AMP and then transferred to the acceptor end of tRNA(Tyr). The sequence is that of Tyrosine--tRNA ligase from Corynebacterium efficiens (strain DSM 44549 / YS-314 / AJ 12310 / JCM 11189 / NBRC 100395).